The sequence spans 502 residues: Cytochrome P450 monooxygenase pyr9 (502 aa).

Residues 5 to 25 (EDASIGTVWVTCLLAVGLYFI) traverse the membrane as a helical segment. Residues Asn205, Asn291, and Asn372 are each glycosylated (N-linked (GlcNAc...) asparagine). Heme is bound at residue Cys437.

Belongs to the cytochrome P450 family. The cofactor is heme.

It localises to the membrane. The protein operates within secondary metabolite biosynthesis; terpenoid biosynthesis. Its function is as follows. Cytochrome P450 monooxygenase; part of the gene cluster that mediates the biosynthesis of pyripyropene A, a specific human acyl-coenzyme A:cholesterol acyltransferase 2 inhibitor. The first step of the pathway is the synthesis of nicotinyl-CoA from nicotinic acid by the nicotinic acid-CoA ligase pyr1. Nicotinyl-CoA is then a substrate of polyketide synthase pyr2 to produce 4-hydroxy-6-(3-pyridinyl)-2H-pyran-2-one (HPPO) which is further prenylated by the polyprenyl transferase pyr6 to yield farnesyl-HPPO. The next steps consist of an epoxidation of farnesyl-HPPO to epoxyfarnesyl-HPPO by FAD-dependent monooxygenase pyr5 and a cyclization of the terpenoid portion by the terpene cyclase pyr4 to yield deacetyl-pyripyropene E. The 2 cytochrome P450 monooxygenases pyr3 and pyr9, and the 2 acetyltransferases pyr7 and pyr8 are involved in the conversion of deacetyl-pyripyropene E into pyripyropene A through several cycles of oxidation and acetylation steps. Pyr7 acetylates deacetyl-pyripyropene E to pyripyropene E which is oxidized to 11-deacetyl-pyripyropene O by pyr3, which is in turn acetylated into pyripyropene O by pyr8. Pyripyropene O is then oxidized to deacetyl-pyripyropene A by pyr9. Deacetyl-pyripyropene A is finally acetylated to pyripyropene A by pyr8. The polypeptide is Cytochrome P450 monooxygenase pyr9 (Aspergillus fumigatus (strain ATCC MYA-4609 / CBS 101355 / FGSC A1100 / Af293) (Neosartorya fumigata)).